Reading from the N-terminus, the 828-residue chain is Translation initiation factor IF-2 (828 aa).

2 disordered regions span residues 48 to 76 and 112 to 148; these read SYSGSTTTLSLNKEKGSLETGSSSGSEEF and ASQEDPIEVEQEESSDTNKVKEEPKIEEVKDIEESTL. Residues 49–58 are compositionally biased toward polar residues; it reads YSGSTTTLSL. Residues 65–74 show a composition bias toward low complexity; it reads LETGSSSGSE. A compositionally biased stretch (acidic residues) spans 116 to 126; it reads DPIEVEQEESS. Over residues 127 to 144 the composition is skewed to basic and acidic residues; it reads DTNKVKEEPKIEEVKDIE. The tr-type G domain occupies 326 to 496; sequence SRAPVVTVMG…LLIAEMQNLK (171 aa). The interval 335 to 342 is G1; sequence GHVDHGKT. 335–342 contributes to the GTP binding site; the sequence is GHVDHGKT. The segment at 360-364 is G2; sequence GITQH. The segment at 382–385 is G3; that stretch reads DTPG. GTP contacts are provided by residues 382 to 386 and 436 to 439; these read DTPGH and NKID. The tract at residues 436–439 is G4; sequence NKID. The tract at residues 472-474 is G5; that stretch reads SAL.

Belongs to the TRAFAC class translation factor GTPase superfamily. Classic translation factor GTPase family. IF-2 subfamily.

It is found in the cytoplasm. Its function is as follows. One of the essential components for the initiation of protein synthesis. Protects formylmethionyl-tRNA from spontaneous hydrolysis and promotes its binding to the 30S ribosomal subunits. Also involved in the hydrolysis of GTP during the formation of the 70S ribosomal complex. The chain is Translation initiation factor IF-2 from Rickettsia bellii (strain OSU 85-389).